The sequence spans 361 residues: Transmembrane protein 116 (361 aa).

A run of 7 helical transmembrane segments spans residues 29 to 49 (WIQM…ILYA), 64 to 84 (FLLS…GLLF), 103 to 123 (TLYM…YTGL), 147 to 167 (LGPV…FVAG), 210 to 230 (CMAI…IFMG), 261 to 281 (MVLY…LATM), and 295 to 315 (VALY…NCLV).

Its subcellular location is the membrane. In Danio rerio (Zebrafish), this protein is Transmembrane protein 116 (tmem116).